We begin with the raw amino-acid sequence, 150 residues long: UPF0098 protein CPn_0877/CP_0992/CPj0877/CpB0906 (150 aa).

It belongs to the UPF0098 family.

The chain is UPF0098 protein CPn_0877/CP_0992/CPj0877/CpB0906 from Chlamydia pneumoniae (Chlamydophila pneumoniae).